The following is a 1112-amino-acid chain: Mediator of RNA polymerase II transcription subunit 14 (1112 aa).

It belongs to the Mediator complex subunit 14 family. In terms of assembly, component of the Mediator complex.

The protein resides in the nucleus. Component of the Mediator complex, a coactivator involved in the regulated transcription of nearly all RNA polymerase II-dependent genes. Mediator functions as a bridge to convey information from gene-specific regulatory proteins to the basal RNA polymerase II transcription machinery. Mediator is recruited to promoters by direct interactions with regulatory proteins and serves as a scaffold for the assembly of a functional preinitiation complex with RNA polymerase II and the general transcription factors. This chain is Mediator of RNA polymerase II transcription subunit 14 (RGR1), found in Scheffersomyces stipitis (strain ATCC 58785 / CBS 6054 / NBRC 10063 / NRRL Y-11545) (Yeast).